We begin with the raw amino-acid sequence, 284 residues long: Formamidopyrimidine-DNA glycosylase (284 aa).

Proline 2 acts as the Schiff-base intermediate with DNA in catalysis. Catalysis depends on glutamate 3, which acts as the Proton donor. Residue lysine 61 is the Proton donor; for beta-elimination activity of the active site. 3 residues coordinate DNA: histidine 95, arginine 115, and arginine 157. The FPG-type zinc finger occupies 243–277 (AVYGRAGQPCRRCGTAIVREPFMNRSSFRCPACQP). Catalysis depends on arginine 267, which acts as the Proton donor; for delta-elimination activity.

It belongs to the FPG family. As to quaternary structure, monomer. Zn(2+) is required as a cofactor.

It catalyses the reaction Hydrolysis of DNA containing ring-opened 7-methylguanine residues, releasing 2,6-diamino-4-hydroxy-5-(N-methyl)formamidopyrimidine.. It carries out the reaction 2'-deoxyribonucleotide-(2'-deoxyribose 5'-phosphate)-2'-deoxyribonucleotide-DNA = a 3'-end 2'-deoxyribonucleotide-(2,3-dehydro-2,3-deoxyribose 5'-phosphate)-DNA + a 5'-end 5'-phospho-2'-deoxyribonucleoside-DNA + H(+). Involved in base excision repair of DNA damaged by oxidation or by mutagenic agents. Acts as a DNA glycosylase that recognizes and removes damaged bases. Has a preference for oxidized purines, such as 7,8-dihydro-8-oxoguanine (8-oxoG). Has AP (apurinic/apyrimidinic) lyase activity and introduces nicks in the DNA strand. Cleaves the DNA backbone by beta-delta elimination to generate a single-strand break at the site of the removed base with both 3'- and 5'-phosphates. This is Formamidopyrimidine-DNA glycosylase from Acidothermus cellulolyticus (strain ATCC 43068 / DSM 8971 / 11B).